Here is a 352-residue protein sequence, read N- to C-terminus: Zona pellucida-binding protein 2 (352 aa).

An N-terminal signal peptide occupies residues 1–28 (MAGGGGRPCSPQRALLGMVAIMAVVAEA). 2 N-linked (GlcNAc...) asparagine glycosylation sites follow: Asn110 and Asn309.

Belongs to the zona pellucida-binding protein Sp38 family.

The protein resides in the secreted. Its subcellular location is the cytoplasmic vesicle. It localises to the secretory vesicle. It is found in the acrosome. Functionally, may be implicated in the gamete interaction during fertilization. The sequence is that of Zona pellucida-binding protein 2 (ZPBP2) from Gallus gallus (Chicken).